A 169-amino-acid polypeptide reads, in one-letter code: S-ribosylhomocysteine lyase (169 aa).

His54, His58, and Cys128 together coordinate Fe cation.

This sequence belongs to the LuxS family. In terms of assembly, homodimer. Requires Fe cation as cofactor.

It catalyses the reaction S-(5-deoxy-D-ribos-5-yl)-L-homocysteine = (S)-4,5-dihydroxypentane-2,3-dione + L-homocysteine. In terms of biological role, involved in the synthesis of autoinducer 2 (AI-2) which is secreted by bacteria and is used to communicate both the cell density and the metabolic potential of the environment. The regulation of gene expression in response to changes in cell density is called quorum sensing. Catalyzes the transformation of S-ribosylhomocysteine (RHC) to homocysteine (HC) and 4,5-dihydroxy-2,3-pentadione (DPD). This Shewanella sediminis (strain HAW-EB3) protein is S-ribosylhomocysteine lyase.